Consider the following 188-residue polypeptide: ATP synthase subunit delta (188 aa).

The protein belongs to the ATPase delta chain family. As to quaternary structure, F-type ATPases have 2 components, F(1) - the catalytic core - and F(0) - the membrane proton channel. F(1) has five subunits: alpha(3), beta(3), gamma(1), delta(1), epsilon(1). F(0) has three main subunits: a(1), b(2) and c(10-14). The alpha and beta chains form an alternating ring which encloses part of the gamma chain. F(1) is attached to F(0) by a central stalk formed by the gamma and epsilon chains, while a peripheral stalk is formed by the delta and b chains.

It localises to the cell inner membrane. Its function is as follows. F(1)F(0) ATP synthase produces ATP from ADP in the presence of a proton or sodium gradient. F-type ATPases consist of two structural domains, F(1) containing the extramembraneous catalytic core and F(0) containing the membrane proton channel, linked together by a central stalk and a peripheral stalk. During catalysis, ATP synthesis in the catalytic domain of F(1) is coupled via a rotary mechanism of the central stalk subunits to proton translocation. In terms of biological role, this protein is part of the stalk that links CF(0) to CF(1). It either transmits conformational changes from CF(0) to CF(1) or is implicated in proton conduction. This chain is ATP synthase subunit delta, found in Rhizobium rhizogenes (strain K84 / ATCC BAA-868) (Agrobacterium radiobacter).